The sequence spans 500 residues: Cytochrome P450 CYP736A12 (500 aa).

The helical transmembrane segment at 4-24 (LAYPLLFVLLGALSWWILPII) threads the bilayer. Residue C442 coordinates heme.

It belongs to the cytochrome P450 family. The cofactor is heme.

It is found in the membrane. In terms of biological role, probable heme-thiolate monooxygenase. The protein is Cytochrome P450 CYP736A12 of Panax ginseng (Korean ginseng).